Here is a 416-residue protein sequence, read N- to C-terminus: Adenosylhomocysteinase (416 aa).

3 residues coordinate substrate: Thr55, Asp126, and Glu151. Residue 152–154 (TTT) participates in NAD(+) binding. Substrate-binding residues include Lys181 and Asp185. Residues Asn186, 215 to 220 (GYGWVG), Glu238, Asn273, 294 to 296 (AGH), and Asn341 each bind NAD(+).

It belongs to the adenosylhomocysteinase family. The cofactor is NAD(+).

Its subcellular location is the cytoplasm. It carries out the reaction S-adenosyl-L-homocysteine + H2O = L-homocysteine + adenosine. The protein operates within amino-acid biosynthesis; L-homocysteine biosynthesis; L-homocysteine from S-adenosyl-L-homocysteine: step 1/1. In terms of biological role, may play a key role in the regulation of the intracellular concentration of adenosylhomocysteine. The polypeptide is Adenosylhomocysteinase (Aeropyrum pernix (strain ATCC 700893 / DSM 11879 / JCM 9820 / NBRC 100138 / K1)).